The following is a 106-amino-acid chain: Large ribosomal subunit protein bL21 (106 aa).

It belongs to the bacterial ribosomal protein bL21 family. In terms of assembly, part of the 50S ribosomal subunit. Contacts protein L20.

In terms of biological role, this protein binds to 23S rRNA in the presence of protein L20. The protein is Large ribosomal subunit protein bL21 of Syntrophobacter fumaroxidans (strain DSM 10017 / MPOB).